The following is a 511-amino-acid chain: Histidine ammonia-lyase (511 aa).

Residues 142–144 (ASG) constitute a cross-link (5-imidazolinone (Ala-Gly)). A 2,3-didehydroalanine (Ser) modification is found at Ser-143.

It belongs to the PAL/histidase family. Contains an active site 4-methylidene-imidazol-5-one (MIO), which is formed autocatalytically by cyclization and dehydration of residues Ala-Ser-Gly.

It is found in the cytoplasm. It carries out the reaction L-histidine = trans-urocanate + NH4(+). It functions in the pathway amino-acid degradation; L-histidine degradation into L-glutamate; N-formimidoyl-L-glutamate from L-histidine: step 1/3. The chain is Histidine ammonia-lyase (hutH) from Rhizobium meliloti (strain 1021) (Ensifer meliloti).